The following is a 723-amino-acid chain: Transient receptor potential cation channel subfamily V member 5 (723 aa).

Topologically, residues 1–320 are cytoplasmic; the sequence is MGAKTPWIQL…SLKWKKYGQP (320 aa). 6 ANK repeats span residues 38–68, 72–101, 110–139, 156–185, 189–222, and 232–261; these read IWESPLLRAAKENDMCTLKKLQHDQNCDFRQ, LGETALHVAALYDNLDAAIMLMEAAPYLVT, VGQTALHIAVMNQNVNLVRALLARGASASA, YGEHPLSFAACVGSEEIVRLLIEHGADIRA, LGNTVLHILVLQPNKTFACQMYNLLLSYDGGDHL, and QGLTPFKLAGVEGNTVMFQHLMQKRKRIQW. The helical transmembrane segment at 321 to 341 threads the bilayer; that stretch reads YFCLLGALYIFYMVCFTTCCV. Residues 342–378 lie on the Extracellular side of the membrane; it reads YRPLKFRDANRTHVRDNTIMEQKSLQEAYVTYQDKIR. The helical transmembrane segment at 379 to 401 threads the bilayer; sequence LVGELVTVIGAVIILLLEIPDIF. The Extracellular segment spans residues 402–412; that stretch reads RVGASRYFGQT. The chain crosses the membrane as a helical span at residues 413 to 435; that stretch reads VLGGPFHVIIITYASLVLLTMAM. Residues 436–441 lie on the Cytoplasmic side of the membrane; that stretch reads RLTNVN. The helical transmembrane segment at 442-462 threads the bilayer; sequence GEVVPMSMALVLGWCSVMYFA. The Extracellular segment spans residues 463–485; it reads RGFQMLGPFTIMIQKMIFGDLLR. The helical transmembrane segment at 486-506 threads the bilayer; that stretch reads FCWLMAMVILGFASAFYIIFQ. Positions 517-537 form an intramembrane region, pore-forming; sequence SDYPTAMFSTFELFLTIIDGP. Asp535 is a binding site for Ca(2+). Residues 550–570 form a helical membrane-spanning segment; sequence VTYATFAIIATLLMLNLFIAM. Residues 571-723 lie on the Cytoplasmic side of the membrane; it reads MGDTHWRVAQ…EGDGEEIYQF (153 aa). The segment at 591–595 is interaction with S100A10; that stretch reads VATTV. The involved in Ca(2+)-dependent inactivation stretch occupies residues 643-646; it reads AFKS. Positions 651-673 are disordered; the sequence is EVQEQLSEKQPSGTETGTLARGS. The span at 654–667 shows a compositional bias: polar residues; it reads EQLSEKQPSGTETG. Phosphothreonine is present on Thr678. Phosphoserine is present on Ser682. The tract at residues 693 to 723 is involved in Ca(2+)-dependent inactivation; sequence RGWEILRRNTLGHLNLGLDPGEGDGEEIYQF.

This sequence belongs to the transient receptor (TC 1.A.4) family. TrpV subfamily. TRPV5 sub-subfamily. Homotetramer and probably heterotetramer with TRPV6. Interacts with TRPV6. Interacts with S100A10 and probably with the ANAX2-S100A10 heterotetramer. The interaction with S100A10 is required for the trafficking to the plasma membrane. Interacts with calmodulin. Interacts with BSPRY, which results in its inactivation. In terms of processing, glycosylated. Detected in kidney cortex (at protein level).

The protein localises to the apical cell membrane. It carries out the reaction Ca(2+)(in) = Ca(2+)(out). Its activity is regulated as follows. Activated by WNK3. Its function is as follows. Constitutively active calcium selective cation channel thought to be involved in Ca(2+) reabsorption in kidney and intestine. Required for normal Ca(2+) reabsorption in the kidney distal convoluted tubules. The channel is activated by low internal calcium level and the current exhibits an inward rectification. A Ca(2+)-dependent feedback regulation includes fast channel inactivation and slow current decay. Heteromeric assembly with TRPV6 seems to modify channel properties. TRPV5-TRPV6 heteromultimeric concatemers exhibit voltage-dependent gating. This Mus musculus (Mouse) protein is Transient receptor potential cation channel subfamily V member 5 (Trpv5).